We begin with the raw amino-acid sequence, 328 residues long: Alanine racemase (328 aa).

Lys33 serves as the catalytic Proton acceptor; specific for D-alanine. Lys33 is subject to N6-(pyridoxal phosphate)lysine. Arg118 lines the substrate pocket. Tyr237 acts as the Proton acceptor; specific for L-alanine in catalysis. Position 283 (Met283) interacts with substrate.

This sequence belongs to the alanine racemase family. The cofactor is pyridoxal 5'-phosphate.

The enzyme catalyses L-alanine = D-alanine. It participates in amino-acid biosynthesis; D-alanine biosynthesis; D-alanine from L-alanine: step 1/1. Catalyzes the interconversion of L-alanine and D-alanine. May also act on other amino acids. The protein is Alanine racemase (alr) of Campylobacter jejuni subsp. jejuni serotype O:23/36 (strain 81-176).